Consider the following 215-residue polypeptide: uncharacterized protein (215 aa).

A signal peptide spans 1-17 (MKKVLASATILSLMLVG). Positions 17–110 (GCSNGGNDES…NKQQQSVQDN (94 aa)) are disordered. The N-palmitoyl cysteine moiety is linked to residue cysteine 18. The S-diacylglycerol cysteine moiety is linked to residue cysteine 18. Residues 25–69 (ESSHKDDSSKTEQKDKSSSQHDSKKDSKRNDTNNKQDNQENKSNK) show a composition bias toward basic and acidic residues. Residues 70–95 (EQTSNQNSNAGEQRTSERPTTNSNGI) are compositionally biased toward polar residues. Residues 96 to 110 (SSDNQNKQQQSVQDN) show a composition bias toward low complexity.

It localises to the cell membrane. This is an uncharacterized protein from Staphylococcus epidermidis (strain ATCC 12228 / FDA PCI 1200).